Here is a 412-residue protein sequence, read N- to C-terminus: Multifunctional CCA protein (412 aa).

2 residues coordinate ATP: Gly8 and Arg11. Gly8 and Arg11 together coordinate CTP. Mg(2+)-binding residues include Glu21 and Asp23. ATP-binding residues include Arg91, Arg137, and Arg140. The CTP site is built by Arg91, Arg137, and Arg140. Residues 228–329 enclose the HD domain; sequence CGIHTLMSLQ…WRLLQRLDVL (102 aa).

Belongs to the tRNA nucleotidyltransferase/poly(A) polymerase family. Bacterial CCA-adding enzyme type 1 subfamily. Monomer. Can also form homodimers and oligomers. It depends on Mg(2+) as a cofactor. Ni(2+) is required as a cofactor.

The catalysed reaction is a tRNA precursor + 2 CTP + ATP = a tRNA with a 3' CCA end + 3 diphosphate. The enzyme catalyses a tRNA with a 3' CCA end + 2 CTP + ATP = a tRNA with a 3' CCACCA end + 3 diphosphate. Its function is as follows. Catalyzes the addition and repair of the essential 3'-terminal CCA sequence in tRNAs without using a nucleic acid template. Adds these three nucleotides in the order of C, C, and A to the tRNA nucleotide-73, using CTP and ATP as substrates and producing inorganic pyrophosphate. tRNA 3'-terminal CCA addition is required both for tRNA processing and repair. Also involved in tRNA surveillance by mediating tandem CCA addition to generate a CCACCA at the 3' terminus of unstable tRNAs. While stable tRNAs receive only 3'-terminal CCA, unstable tRNAs are marked with CCACCA and rapidly degraded. This is Multifunctional CCA protein from Acinetobacter baumannii (strain AB307-0294).